The chain runs to 353 residues: Ferredoxin--NADP reductase 1 (353 aa).

8 residues coordinate FAD: threonine 14, aspartate 33, glutamine 41, tyrosine 46, alanine 86, phenylalanine 121, aspartate 289, and threonine 330.

The protein belongs to the ferredoxin--NADP reductase type 2 family. Homodimer. FAD is required as a cofactor.

The catalysed reaction is 2 reduced [2Fe-2S]-[ferredoxin] + NADP(+) + H(+) = 2 oxidized [2Fe-2S]-[ferredoxin] + NADPH. In Christiangramia forsetii (strain DSM 17595 / CGMCC 1.15422 / KT0803) (Gramella forsetii), this protein is Ferredoxin--NADP reductase 1.